A 298-amino-acid chain; its full sequence is ATP synthase F(1) complex subunit gamma, mitochondrial (298 aa).

Residues 1–25 (MFSRAGVAGLSAWTVQPQWIQVRNM) constitute a mitochondrion transit peptide. Lys-39 is subject to N6-acetyllysine. The residue at position 49 (Lys-49) is an N6-succinyllysine. Lys-55 bears the N6-acetyllysine mark. Lys-115 is subject to N6-acetyllysine; alternate. Lys-115 carries the post-translational modification N6-succinyllysine; alternate. Ser-146 bears the Phosphoserine mark. Lys-154 is subject to N6-acetyllysine; alternate. An N6-succinyllysine; alternate modification is found at Lys-154. Lys-197 is subject to N6-acetyllysine. At Lys-270 the chain carries N6-succinyllysine.

This sequence belongs to the ATPase gamma chain family. As to quaternary structure, component of the ATP synthase complex composed at least of ATP5F1A/subunit alpha, ATP5F1B/subunit beta, ATP5MC1/subunit c (homooctomer), MT-ATP6/subunit a, MT-ATP8/subunit 8, ATP5ME/subunit e, ATP5MF/subunit f, ATP5MG/subunit g, ATP5MK/subunit k, ATP5MJ/subunit j, ATP5F1C/subunit gamma, ATP5F1D/subunit delta, ATP5F1E/subunit epsilon, ATP5PF/subunit F6, ATP5PB/subunit b, ATP5PD/subunit d, ATP5PO/subunit OSCP. ATP synthase complex consists of a soluble F(1) head domain (subunits alpha(3) and beta(3)) - the catalytic core - and a membrane F(0) domain - the membrane proton channel (subunits c, a, 8, e, f, g, k and j). These two domains are linked by a central stalk (subunits gamma, delta, and epsilon) rotating inside the F1 region and a stationary peripheral stalk (subunits F6, b, d, and OSCP). Interacts with FLVCR2; this interaction occurs in the absence of heme and is disrupted upon heme binding.

The protein resides in the mitochondrion inner membrane. In terms of biological role, subunit gamma, of the mitochondrial membrane ATP synthase complex (F(1)F(0) ATP synthase or Complex V) that produces ATP from ADP in the presence of a proton gradient across the membrane which is generated by electron transport complexes of the respiratory chain. ATP synthase complex consist of a soluble F(1) head domain - the catalytic core - and a membrane F(1) domain - the membrane proton channel. These two domains are linked by a central stalk rotating inside the F(1) region and a stationary peripheral stalk. During catalysis, ATP synthesis in the catalytic domain of F(1) is coupled via a rotary mechanism of the central stalk subunits to proton translocation. In vivo, can only synthesize ATP although its ATP hydrolase activity can be activated artificially in vitro. With the central stalk subunit delta, is essential for the biogenesis of F(1) catalytic part of the ATP synthase complex namely in the formation of F1 assembly intermediate. The protein is ATP synthase F(1) complex subunit gamma, mitochondrial of Bos taurus (Bovine).